Consider the following 347-residue polypeptide: GMP reductase (347 aa).

108 to 131 is an NADP(+) binding site; the sequence is ADFEKTKQILDLNPALNFVCIDVA. K(+) is bound by residues Gly-181 and Gly-183. Catalysis depends on Cys-186, which acts as the Thioimidate intermediate. 216 to 239 contributes to the NADP(+) binding site; it reads IVSDGGCTTPGDVAKAFGGGADFV.

It belongs to the IMPDH/GMPR family. GuaC type 1 subfamily. As to quaternary structure, homotetramer.

It catalyses the reaction IMP + NH4(+) + NADP(+) = GMP + NADPH + 2 H(+). In terms of biological role, catalyzes the irreversible NADPH-dependent deamination of GMP to IMP. It functions in the conversion of nucleobase, nucleoside and nucleotide derivatives of G to A nucleotides, and in maintaining the intracellular balance of A and G nucleotides. The polypeptide is GMP reductase (Shigella flexneri serotype 5b (strain 8401)).